The primary structure comprises 99 residues: Ribonuclease P protein component 1 (99 aa).

The protein belongs to the eukaryotic/archaeal RNase P protein component 1 family. As to quaternary structure, consists of a catalytic RNA component and at least 4-5 protein subunits.

It localises to the cytoplasm. It catalyses the reaction Endonucleolytic cleavage of RNA, removing 5'-extranucleotides from tRNA precursor.. In terms of biological role, part of ribonuclease P, a protein complex that generates mature tRNA molecules by cleaving their 5'-ends. The chain is Ribonuclease P protein component 1 from Methanococcus vannielii.